The primary structure comprises 206 residues: Large ribosomal subunit protein uL22m (206 aa).

A mitochondrion-targeting transit peptide spans 1-40 (MAAALLRELGALRVPNLRIWATQTLRVLPPSCIHTSASLD).

It belongs to the universal ribosomal protein uL22 family. Component of the mitochondrial ribosome large subunit (39S) which comprises a 16S rRNA and about 50 distinct proteins.

It is found in the mitochondrion. The protein is Large ribosomal subunit protein uL22m (Mrpl22) of Mus musculus (Mouse).